A 347-amino-acid polypeptide reads, in one-letter code: S-adenosylmethionine decarboxylase proenzyme 4 (347 aa).

Catalysis depends on residues Glu-7 and Glu-10. Residue Glu-66 participates in substrate binding. Ser-67 serves as the catalytic Schiff-base intermediate with substrate; via pyruvic acid. The residue at position 67 (Ser-67) is a Pyruvic acid (Ser); by autocatalysis. Catalysis depends on Cys-81, which acts as the Proton donor; for catalytic activity. Catalysis depends on proton acceptor; for processing activity residues Ser-237 and His-250. Glu-254 provides a ligand contact to substrate.

Belongs to the eukaryotic AdoMetDC family. Pyruvate serves as cofactor. Is synthesized initially as an inactive proenzyme. Formation of the active enzyme involves a self-maturation process in which the active site pyruvoyl group is generated from an internal serine residue via an autocatalytic post-translational modification. Two non-identical subunits are generated from the proenzyme in this reaction, and the pyruvate is formed at the N-terminus of the alpha chain, which is derived from the carboxyl end of the proenzyme. The post-translation cleavage follows an unusual pathway, termed non-hydrolytic serinolysis, in which the side chain hydroxyl group of the serine supplies its oxygen atom to form the C-terminus of the beta chain, while the remainder of the serine residue undergoes an oxidative deamination to produce ammonia and the pyruvoyl group blocking the N-terminus of the alpha chain.

The enzyme catalyses S-adenosyl-L-methionine + H(+) = S-adenosyl 3-(methylsulfanyl)propylamine + CO2. The protein operates within amine and polyamine biosynthesis; S-adenosylmethioninamine biosynthesis; S-adenosylmethioninamine from S-adenosyl-L-methionine: step 1/1. Functionally, essential for biosynthesis of the polyamines spermidine and spermine. Essential for polyamine homeostasis, and normal plant embryogenesis, growth and development. This chain is S-adenosylmethionine decarboxylase proenzyme 4, found in Arabidopsis thaliana (Mouse-ear cress).